Here is a 312-residue protein sequence, read N- to C-terminus: Serine protease 48 (312 aa).

The first 22 residues, 1-22 (MGPAGLKVLLLLFLGAFQGSFT), serve as a signal peptide directing secretion. Positions 40-276 (IVGGQDAALG…YQKWISAIIS (237 aa)) constitute a Peptidase S1 domain. Cys-65 and Cys-81 form a disulfide bridge. Active-site charge relay system residues include His-80 and Asp-126. N-linked (GlcNAc...) asparagine glycosylation is present at Asn-149. Disulfide bonds link Cys-160/Cys-235, Cys-190/Cys-214, and Cys-225/Cys-253. Ser-229 acts as the Charge relay system in catalysis. Residue Asn-263 is glycosylated (N-linked (GlcNAc...) asparagine).

The protein belongs to the peptidase S1 family.

The protein localises to the secreted. The sequence is that of Serine protease 48 (Prss48) from Mus musculus (Mouse).